Here is a 118-residue protein sequence, read N- to C-terminus: Co-chaperonin GroES (118 aa).

Belongs to the GroES chaperonin family. As to quaternary structure, heptamer of 7 subunits arranged in a ring. Interacts with the chaperonin GroEL.

The protein resides in the cytoplasm. Its function is as follows. Together with the chaperonin GroEL, plays an essential role in assisting protein folding. The GroEL-GroES system forms a nano-cage that allows encapsulation of the non-native substrate proteins and provides a physical environment optimized to promote and accelerate protein folding. GroES binds to the apical surface of the GroEL ring, thereby capping the opening of the GroEL channel. In Helicobacter pylori (strain P12), this protein is Co-chaperonin GroES.